Reading from the N-terminus, the 262-residue chain is MKKMDIKAQDILNFLTKKYDLSKAEAWDKNGLFFDEQQTINNVQIALDITDDVVNDAILNNANLIISHHPLFTNQDSNDEVNYFVNIDLIEKIKKNKISLIHLHTAFDASANGMSMQMAKRLGLLNLKQDEQNPYLVVGELKLGVSVDYISRIIKQKFLSPIIKYNNVFRLETNLKKIGIIGGSGYKFADDAFNRYQLDMLITSDLKYHNWLDAQAKKQNIIDMNHLSESIFIDVIYDELTKFYGNDANLNKSLSIIKINYI.

Positions 68, 69, 108, 226, and 229 each coordinate a divalent metal cation.

Belongs to the GTP cyclohydrolase I type 2/NIF3 family. Homohexamer.

The sequence is that of GTP cyclohydrolase 1 type 2 homolog from Ureaplasma parvum serovar 3 (strain ATCC 700970).